The primary structure comprises 290 residues: Small ribosomal subunit biogenesis GTPase RsgA (290 aa).

Positions 62–213 (KNSLVRPPIV…IADTPGFSSL (152 aa)) constitute a CP-type G domain. GTP contacts are provided by residues 111-114 (SKMD) and 156-164 (GQTGVGKST). 4 residues coordinate Zn(2+): cysteine 237, cysteine 242, histidine 244, and cysteine 250.

It belongs to the TRAFAC class YlqF/YawG GTPase family. RsgA subfamily. In terms of assembly, monomer. Associates with 30S ribosomal subunit, binds 16S rRNA. The cofactor is Zn(2+).

It is found in the cytoplasm. In terms of biological role, one of several proteins that assist in the late maturation steps of the functional core of the 30S ribosomal subunit. Helps release RbfA from mature subunits. May play a role in the assembly of ribosomal proteins into the subunit. Circularly permuted GTPase that catalyzes slow GTP hydrolysis, GTPase activity is stimulated by the 30S ribosomal subunit. The sequence is that of Small ribosomal subunit biogenesis GTPase RsgA from Streptococcus pyogenes serotype M3 (strain ATCC BAA-595 / MGAS315).